A 255-amino-acid chain; its full sequence is MSAAAAGRGERLNHAGNPGHRSKYSRVLLKLGGEMFGGGQVGLDLDVVAQVARQIAEVVRGGVQVAVVIGGGNFFRGAQLQQRGMERTRSDYMGMLGTVMNSLALQDFLEKEGIATRVQTAITMGQVAEPYLPLRAVRHLEKGRVVIFGAGMGLPYFSTDTTAAQRALEIGADVVLMAKAVDGVFVEDPRVNPEAELLTAISHREVIDRGLRVADATAFSLCMDNGMPILVFNLLTNGNIARAVAGEKIGTLVTT.

The disordered stretch occupies residues 1-21 (MSAAAAGRGERLNHAGNPGHR). 30 to 33 (KLGG) contacts ATP. Residue glycine 71 coordinates UMP. Residues glycine 72 and arginine 76 each contribute to the ATP site. Residues aspartate 91 and 152–159 (MGLPYFST) contribute to the UMP site. The ATP site is built by phenylalanine 185 and aspartate 188.

This sequence belongs to the UMP kinase family. Homohexamer.

Its subcellular location is the cytoplasm. The enzyme catalyses UMP + ATP = UDP + ADP. It participates in pyrimidine metabolism; CTP biosynthesis via de novo pathway; UDP from UMP (UMPK route): step 1/1. Inhibited by UTP. Functionally, catalyzes the reversible phosphorylation of UMP to UDP. In Mycobacterium leprae (strain TN), this protein is Uridylate kinase.